The primary structure comprises 75 residues: MNKSRHSSRRRSPSIRSDETIDYKNTSLLRRFVSEQGKILSRRMNRLTSKQQRLIATAIKRARILALLPFSNNES.

It belongs to the bacterial ribosomal protein bS18 family. In terms of assembly, part of the 30S ribosomal subunit.

It localises to the plastid. The protein resides in the chloroplast. The chain is Small ribosomal subunit protein bS18c from Adiantum capillus-veneris (Maidenhair fern).